Reading from the N-terminus, the 149-residue chain is Large ribosomal subunit protein uL15 (149 aa).

A disordered region spans residues 14 to 57; the sequence is KQRKRVGRGSGSGWGCTSGKGNKGQNARSGGGVRPGFEGGQMPL. 2 stretches are compositionally biased toward gly residues: residues 21-35 and 42-52; these read RGSGSGWGCTSGKGN and SGGGVRPGFEG.

It belongs to the universal ribosomal protein uL15 family. Part of the 50S ribosomal subunit.

Functionally, binds to the 23S rRNA. The chain is Large ribosomal subunit protein uL15 from Oleidesulfovibrio alaskensis (strain ATCC BAA-1058 / DSM 17464 / G20) (Desulfovibrio alaskensis).